A 216-amino-acid polypeptide reads, in one-letter code: Ras-related protein Rab-5C (216 aa).

The GTP site is built by S30, A31, G33, K34, S35, S36, H47, E48, T53, and G79. Mg(2+) is bound at residue S35. 2 consecutive short sequence motifs (switch) follow at residues 45–57 (QFHE…IGAA) and 78–94 (AGQE…YRGA). Position 53 (T53) interacts with Mg(2+). At S85 the chain carries Phosphoserine. GTP contacts are provided by N134, K135, D137, A165, and K166. Residues 185–216 (NEPQNAAGAPSRNRGVDLQENSPASRSQCCSN) are disordered. The span at 203–216 (QENSPASRSQCCSN) shows a compositional bias: polar residues. Residues C213 and C214 are each lipidated (S-geranylgeranyl cysteine).

It belongs to the small GTPase superfamily. Rab family. In terms of assembly, interacts with EEA1 and INCA1. Interacts with GDI1, GDI2, CHML and CHM; phosphorylation at Ser-85 disrupts this interaction. Requires Mg(2+) as cofactor. Phosphorylation of Ser-85 in the switch II region by LRRK2 prevents the association of RAB regulatory proteins, including CHM, CHML and RAB GDP dissociation inhibitors GDI1 and GDI2.

The protein resides in the cell membrane. It is found in the early endosome membrane. The protein localises to the melanosome. It carries out the reaction GTP + H2O = GDP + phosphate + H(+). Regulated by guanine nucleotide exchange factors (GEFs) which promote the exchange of bound GDP for free GTP. Regulated by GTPase activating proteins (GAPs) which increase the GTP hydrolysis activity. Inhibited by GDP dissociation inhibitors (GDIs). Functionally, the small GTPases Rab are key regulators of intracellular membrane trafficking, from the formation of transport vesicles to their fusion with membranes. Rabs cycle between an inactive GDP-bound form and an active GTP-bound form that is able to recruit to membranes different sets of downstream effectors directly responsible for vesicle formation, movement, tethering and fusion. The polypeptide is Ras-related protein Rab-5C (RAB5C) (Canis lupus familiaris (Dog)).